Here is a 137-residue protein sequence, read N- to C-terminus: Large-conductance mechanosensitive channel (137 aa).

2 helical membrane-spanning segments follow: residues 9–29 (AFAV…GAAF) and 79–99 (IQTI…VKAI).

Belongs to the MscL family. Homopentamer.

It is found in the cell inner membrane. Functionally, channel that opens in response to stretch forces in the membrane lipid bilayer. May participate in the regulation of osmotic pressure changes within the cell. In Pseudomonas paraeruginosa (strain DSM 24068 / PA7) (Pseudomonas aeruginosa (strain PA7)), this protein is Large-conductance mechanosensitive channel.